Consider the following 510-residue polypeptide: GMP synthase [glutamine-hydrolyzing] (510 aa).

In terms of domain architecture, Glutamine amidotransferase type-1 spans 5–195; the sequence is LVIVLDFGGQ…LFNIADLSAD (191 aa). Residue Cys82 is the Nucleophile of the active site. Residues His169 and Glu171 contribute to the active site. The GMPS ATP-PPase domain maps to 196–385; it reads WTMGSYIEET…LGLHREIVER (190 aa). 223-229 is an ATP binding site; the sequence is SGGIDST.

Homodimer.

The enzyme catalyses XMP + L-glutamine + ATP + H2O = GMP + L-glutamate + AMP + diphosphate + 2 H(+). It participates in purine metabolism; GMP biosynthesis; GMP from XMP (L-Gln route): step 1/1. Catalyzes the synthesis of GMP from XMP. The protein is GMP synthase [glutamine-hydrolyzing] of Natranaerobius thermophilus (strain ATCC BAA-1301 / DSM 18059 / JW/NM-WN-LF).